We begin with the raw amino-acid sequence, 147 residues long: MGHFTEEDKATITSLWGKVNVEDAGGETLGRLLVVYPWTQRFFDSFGNLSSASAIMGNPKVKAHGKKVLTSLGGAIKHLDDLKGTFAQLSELHCDKLHVDPENFRLLGNVLVTVLAIHFGKEFTPEVQASWQKMVTAVASALSSRYH.

Glycine 2 is modified (N-acetylglycine). The 145-residue stretch at 3–147 (HFTEEDKATI…VASALSSRYH (145 aa)) folds into the Globin domain. Residue threonine 13 is modified to Phosphothreonine. Residues serine 45, serine 51, and serine 53 each carry the phosphoserine modification. At lysine 60 the chain carries N6-acetyllysine. Histidine 64 contributes to the heme b binding site. At lysine 83 the chain carries N6-acetyllysine. Position 93 (histidine 93) interacts with heme b. Cysteine 94 carries the S-nitrosocysteine modification. Serine 140 bears the Phosphoserine mark.

Belongs to the globin family. Heterotetramer of two alpha chains and two gamma chains in fetal hemoglobin (Hb F). Red blood cells.

Its function is as follows. Gamma chains make up the fetal hemoglobin F, in combination with alpha chains. This is Hemoglobin subunit gamma-1 (HBG1) from Gorilla gorilla gorilla (Western lowland gorilla).